The primary structure comprises 156 residues: Ribosomal RNA large subunit methyltransferase H (156 aa).

S-adenosyl-L-methionine contacts are provided by residues Leu73, Gly104, and 123 to 128 (LSPLTL).

Belongs to the RNA methyltransferase RlmH family. In terms of assembly, homodimer.

The protein localises to the cytoplasm. The catalysed reaction is pseudouridine(1915) in 23S rRNA + S-adenosyl-L-methionine = N(3)-methylpseudouridine(1915) in 23S rRNA + S-adenosyl-L-homocysteine + H(+). Functionally, specifically methylates the pseudouridine at position 1915 (m3Psi1915) in 23S rRNA. The protein is Ribosomal RNA large subunit methyltransferase H of Aliivibrio salmonicida (strain LFI1238) (Vibrio salmonicida (strain LFI1238)).